A 194-amino-acid polypeptide reads, in one-letter code: Imidazoleglycerol-phosphate dehydratase (194 aa).

This sequence belongs to the imidazoleglycerol-phosphate dehydratase family.

Its subcellular location is the cytoplasm. It catalyses the reaction D-erythro-1-(imidazol-4-yl)glycerol 3-phosphate = 3-(imidazol-4-yl)-2-oxopropyl phosphate + H2O. The protein operates within amino-acid biosynthesis; L-histidine biosynthesis; L-histidine from 5-phospho-alpha-D-ribose 1-diphosphate: step 6/9. The protein is Imidazoleglycerol-phosphate dehydratase of Listeria innocua serovar 6a (strain ATCC BAA-680 / CLIP 11262).